The primary structure comprises 428 residues: Glutamate-1-semialdehyde 2,1-aminomutase (428 aa).

Residue Lys-267 is modified to N6-(pyridoxal phosphate)lysine.

The protein belongs to the class-III pyridoxal-phosphate-dependent aminotransferase family. HemL subfamily. Homodimer. Requires pyridoxal 5'-phosphate as cofactor.

The protein localises to the cytoplasm. It catalyses the reaction (S)-4-amino-5-oxopentanoate = 5-aminolevulinate. The protein operates within porphyrin-containing compound metabolism; protoporphyrin-IX biosynthesis; 5-aminolevulinate from L-glutamyl-tRNA(Glu): step 2/2. This is Glutamate-1-semialdehyde 2,1-aminomutase from Sulfurihydrogenibium sp. (strain YO3AOP1).